The following is a 574-amino-acid chain: Membrane protein insertase YidC (574 aa).

Residues valine 6–aspartate 26 form a helical membrane-spanning segment. Positions arginine 45 to serine 77 are disordered. Transmembrane regions (helical) follow at residues phenylalanine 356–phenylalanine 376, tryptophan 380–alanine 400, glycine 447–valine 467, proline 489–proline 509, and proline 525–valine 545.

The protein belongs to the OXA1/ALB3/YidC family. Type 1 subfamily. In terms of assembly, interacts with the Sec translocase complex via SecD. Specifically interacts with transmembrane segments of nascent integral membrane proteins during membrane integration.

The protein resides in the cell inner membrane. Its function is as follows. Required for the insertion and/or proper folding and/or complex formation of integral membrane proteins into the membrane. Involved in integration of membrane proteins that insert both dependently and independently of the Sec translocase complex, as well as at least some lipoproteins. Aids folding of multispanning membrane proteins. The polypeptide is Membrane protein insertase YidC (Xanthomonas euvesicatoria pv. vesicatoria (strain 85-10) (Xanthomonas campestris pv. vesicatoria)).